Consider the following 133-residue polypeptide: Arsenate reductase 1 (133 aa).

Residues Cys-10, Cys-82, and Cys-89 each act as nucleophile in the active site. Cystine bridges form between Cys-10–Cys-82 and Cys-82–Cys-89.

Belongs to the low molecular weight phosphotyrosine protein phosphatase family. Thioredoxin-coupled ArsC subfamily.

It is found in the cytoplasm. The enzyme catalyses arsenate + [thioredoxin]-dithiol + H(+) = arsenite + [thioredoxin]-disulfide + H2O. Its function is as follows. Catalyzes the reduction of arsenate [As(V)] to arsenite [As(III)]. This chain is Arsenate reductase 1, found in Staphylococcus haemolyticus (strain JCSC1435).